The following is a 404-amino-acid chain: MALVNPHGKEKVLKPLLLTGDELVSEKERAKSMKQVRLSSRETGDLIMLGIGGFTPLTGFMGHADWKGSVETCTMADGTFWPIPITLSTSKEQADTIAIGEEVALVDDESGELMGSMKVEEKYCIDKAHECREVFKTDDPAHPGVLMVMNQGDVNLAGPVKVFSEGSFPTEFAGIYMTPAQTRKMFEENGWSTVAAFQTRNPMHRSHEYLVKIAVEICDGVLIHQLLGKLKPGDIPADVRRDCINVLTEKYFVKGTTIQAGYPLDMRYAGPREALLHALFRQNFGCSHLIVGRDHAGVGDYYGPFDAHHIFDQIPEGALETKPLKIDWTFYCYKCDAMASMKTCPHEPADRLNLSGTKLRKMLSEGEEVPEHFSRPEVLEILRRYYAGLTEKVDIKMHSHAIGK.

The protein belongs to the sulfate adenylyltransferase family.

It carries out the reaction sulfate + ATP + H(+) = adenosine 5'-phosphosulfate + diphosphate. Its pathway is sulfur metabolism; hydrogen sulfide biosynthesis; sulfite from sulfate: step 1/3. The chain is Sulfate adenylyltransferase from Chlorobaculum tepidum (strain ATCC 49652 / DSM 12025 / NBRC 103806 / TLS) (Chlorobium tepidum).